The sequence spans 246 residues: Probable transcriptional regulatory protein WP1214 (246 aa).

Residues 1-22 (MAGHSQFSNIKHRKGAQDAKRS) are disordered.

Belongs to the TACO1 family.

It is found in the cytoplasm. This is Probable transcriptional regulatory protein WP1214 from Wolbachia pipientis subsp. Culex pipiens (strain wPip).